The sequence spans 288 residues: Ankyrin repeat and SOCS box protein 8 (288 aa).

Ser17 carries the post-translational modification Phosphoserine. ANK repeat units lie at residues 52-81, 85-113, 117-146, and 150-179; these read GTLKPLHCACMVSDADCVELLLEKGAEVNA, YNRTALHYAAEKDEACVEVLLEYGANPNA, NRDTPLHWAAFKNNAECVRALLESGASVNA, and NNDTPLSWAAMKGNLESVSILLDYGAEVRV. The SOCS box domain maps to 235 to 288; that stretch reads QLCEKLTVLCSAPGTLKTLARYAVRRSLGLQYLPDAVKGLPLPASLKEYLLLLE.

The protein belongs to the ankyrin SOCS box (ASB) family. As to quaternary structure, interacts with TBK1; this interaction promotes TBK1 proteasomal degradation. Phosphorylated by TBK1. As to expression, highest level of expression in skeletal muscle. Also expressed in heart, brain, placenta, liver, kidney and pancreas.

It localises to the cytoplasm. The protein operates within protein modification; protein ubiquitination. In terms of biological role, may be a substrate-recognition component of a SCF-like ECS (Elongin-Cullin-SOCS-box protein) E3 ubiquitin-protein ligase complex which mediates the ubiquitination and subsequent proteasomal degradation of target proteins. Inhibits IFN-beta production through the IRF3 signaling pathway by targeting TBK1 via 'Lys-48'-linked ubiquitination, leading to its proteasomal degradation. The polypeptide is Ankyrin repeat and SOCS box protein 8 (ASB8) (Homo sapiens (Human)).